Consider the following 172-residue polypeptide: Translationally-controlled tumor protein (172 aa).

Positions 1-172 constitute a TCTP domain; sequence MIIYRDLISH…FKDGLEMEKC (172 aa). A phosphoserine mark is found at S46 and S53. S64 is modified (phosphoserine; by PLK1). Positions 70–172 are required for reduction of TSC22D1 protein stability; it reads VDIVMNHHLQ…FKDGLEMEKC (103 aa).

Belongs to the TCTP family. As to quaternary structure, homodimer. Interacts with STEAP3. Interacts with TSC22D1; interaction results in the destabilization of TSC22D1 protein.

It is found in the cytoplasm. In terms of biological role, involved in calcium binding and microtubule stabilization. Acts as a negative regulator of TSC22D1-mediated apoptosis, via interaction with and destabilization of TSC22D1 protein. The chain is Translationally-controlled tumor protein (Tpt1) from Mus musculus (Mouse).